Reading from the N-terminus, the 543-residue chain is CTP synthase (543 aa).

The interval 1–267 is amidoligase domain; sequence MKQTKYIFVT…LSPIAEILDL (267 aa). Residue S15 participates in CTP binding. UTP is bound at residue S15. Residues 16 to 21 and D73 contribute to the ATP site; that span reads SLGKGI. D73 and E141 together coordinate Mg(2+). CTP-binding positions include 148–150, 188–193, and K224; these read DIE and KTKPTQ. UTP-binding positions include 188–193 and K224; that span reads KTKPTQ. Positions 292–543 constitute a Glutamine amidotransferase type-1 domain; that stretch reads KIAFVGKYVD…IKAAINYEDN (252 aa). L-glutamine is bound at residue G354. Residue C381 is the Nucleophile; for glutamine hydrolysis of the active site. Residues 382-385, E405, and R473 each bind L-glutamine; that span reads LGMQ. Residues H516 and E518 contribute to the active site.

The protein belongs to the CTP synthase family. Homotetramer.

It carries out the reaction UTP + L-glutamine + ATP + H2O = CTP + L-glutamate + ADP + phosphate + 2 H(+). The enzyme catalyses L-glutamine + H2O = L-glutamate + NH4(+). The catalysed reaction is UTP + NH4(+) + ATP = CTP + ADP + phosphate + 2 H(+). It participates in pyrimidine metabolism; CTP biosynthesis via de novo pathway; CTP from UDP: step 2/2. Its activity is regulated as follows. Allosterically activated by GTP, when glutamine is the substrate; GTP has no effect on the reaction when ammonia is the substrate. The allosteric effector GTP functions by stabilizing the protein conformation that binds the tetrahedral intermediate(s) formed during glutamine hydrolysis. Inhibited by the product CTP, via allosteric rather than competitive inhibition. Catalyzes the ATP-dependent amination of UTP to CTP with either L-glutamine or ammonia as the source of nitrogen. Regulates intracellular CTP levels through interactions with the four ribonucleotide triphosphates. The sequence is that of CTP synthase from Campylobacter jejuni subsp. jejuni serotype O:23/36 (strain 81-176).